A 121-amino-acid polypeptide reads, in one-letter code: Putative SNURF-like protein (121 aa).

The protein belongs to the SNURF family.

The polypeptide is Putative SNURF-like protein (SNURFL) (Homo sapiens (Human)).